The chain runs to 323 residues: Fructose-1,6-bisphosphatase class 1 (323 aa).

Positions 88, 107, 109, and 110 each coordinate Mg(2+). Substrate contacts are provided by residues 110–113 and asparagine 200; that span reads DGSS. Glutamate 272 lines the Mg(2+) pocket.

The protein belongs to the FBPase class 1 family. As to quaternary structure, homotetramer. Mg(2+) serves as cofactor.

Its subcellular location is the cytoplasm. The enzyme catalyses beta-D-fructose 1,6-bisphosphate + H2O = beta-D-fructose 6-phosphate + phosphate. It participates in carbohydrate biosynthesis; gluconeogenesis. The protein is Fructose-1,6-bisphosphatase class 1 of Acinetobacter baumannii (strain AYE).